The following is a 337-amino-acid chain: Dihydroorotate dehydrogenase (quinone) (337 aa).

Residues 61-65 (AGLDK) and T85 each bind FMN. Substrate is bound at residue K65. 110–114 (NRMGF) is a substrate binding site. FMN contacts are provided by N138 and N171. Residue N171 participates in substrate binding. The active-site Nucleophile is S174. N176 provides a ligand contact to substrate. FMN is bound by residues K216 and T244. Residue 245 to 246 (NT) participates in substrate binding. FMN-binding positions include G267, G296, and 317-318 (YS).

It belongs to the dihydroorotate dehydrogenase family. Type 2 subfamily. As to quaternary structure, monomer. FMN serves as cofactor.

It is found in the cell membrane. The catalysed reaction is (S)-dihydroorotate + a quinone = orotate + a quinol. Its pathway is pyrimidine metabolism; UMP biosynthesis via de novo pathway; orotate from (S)-dihydroorotate (quinone route): step 1/1. Its function is as follows. Catalyzes the conversion of dihydroorotate to orotate with quinone as electron acceptor. The sequence is that of Dihydroorotate dehydrogenase (quinone) from Thiobacillus denitrificans (strain ATCC 25259 / T1).